A 625-amino-acid chain; its full sequence is Chaperone protein HtpG (625 aa).

Positions 1 to 341 (MERKEFKAES…SEDLSLNISR (341 aa)) are a; substrate-binding. The segment at 342-551 (EMLQHDRQLK…EGEVSIEMEK (210 aa)) is b. A c region spans residues 552-625 (VLRAMPDNQN…FSNDICKVMA (74 aa)).

Belongs to the heat shock protein 90 family. In terms of assembly, homodimer.

It is found in the cytoplasm. Molecular chaperone. Has ATPase activity. The polypeptide is Chaperone protein HtpG (Halalkalibacterium halodurans (strain ATCC BAA-125 / DSM 18197 / FERM 7344 / JCM 9153 / C-125) (Bacillus halodurans)).